The chain runs to 2108 residues: Kinesin-like protein KIF26B (2108 aa).

2 disordered regions span residues 1-124 (MNSV…PGSD) and 263-287 (KHGS…PTHQ). Residues 40-50 (WYRKAYEESRA) are compositionally biased toward basic and acidic residues. The segment covering 58 to 98 (GAGSALGSSGTPSPGSGTSSPSSFTGSPGPASPGIGTSSPG) has biased composition (low complexity). Positions 99–120 (SLGGSPGFGTGSPGSGSGGGSS) are enriched in gly residues. The 352-residue stretch at 450–801 (KVKVMLRICS…IQIASRVLRM (352 aa)) folds into the Kinesin motor domain. An ATP-binding site is contributed by 546–553 (GHAKLGKS). Disordered stretches follow at residues 805–825 (KTKY…GRMR), 876–917 (SDKE…GKSE), 937–1166 (DGSE…ESKK), 1406–1504 (EPEA…PVTD), 1519–1653 (GLAT…SSSK), 1685–1799 (AESL…ASKL), and 1824–1974 (RAGP…WVDG). Low complexity predominate over residues 1004–1046 (SHSPVPAAAPAHSPSPASPRSVPGSSSQHSASPLVQSPSLQSS). Residues 1424–1461 (RESKENSAKKEMKFEDPWLKREEEVKKETAHPNEEGMM) are compositionally biased toward basic and acidic residues. Positions 1491–1500 (SSSSGEVSAS) are enriched in low complexity. 2 stretches are compositionally biased toward polar residues: residues 1521-1537 (ATQS…SSSL) and 1611-1628 (RASP…SPLN). Low complexity-rich tracts occupy residues 1713 to 1730 (SAGT…AGQS) and 1751 to 1763 (STTK…TKSL). Over residues 1781–1795 (PWSTQSLSRNRSSGL) the composition is skewed to polar residues. Residues 1824–1836 (RAGPEAEARGGAL) are compositionally biased toward low complexity. T1855 bears the Phosphothreonine mark. Polar residues-rich tracts occupy residues 1866–1875 (GHGSDNSSVL) and 1907–1925 (ATGS…SSSV). Over residues 1930 to 1948 (RSLKTPKKRSNPGSQRRRL) the composition is skewed to basic residues. Polar residues predominate over residues 1954 to 1968 (LDTSSPVRKPPNSTG). S1958 is subject to Phosphoserine.

It belongs to the TRAFAC class myosin-kinesin ATPase superfamily. Kinesin family. KIF26 subfamily. As to quaternary structure, interacts with MYH10. Phosphorylation at Thr-1855 and Ser-1958 by CDKs, mainly CDK2 and CDK5, enhances the interaction with NEDD4, polyubiquitination, and subsequent proteasomal degradation. Phosphorylation occurs upon loss of interaction with microtubules. In terms of processing, polyubiquitinated by NEDD4, resulting in proteasomal degradation.

The protein resides in the cytoplasm. The protein localises to the cytoskeleton. Essential for embryonic kidney development. Plays an important role in the compact adhesion between mesenchymal cells adjacent to the ureteric buds, possibly by interacting with MYH10. This could lead to the establishment of the basolateral integrity of the mesenchyme and the polarized expression of ITGA8, which maintains the GDNF expression required for further ureteric bud attraction. Although it seems to lack ATPase activity it is constitutively associated with microtubules. The sequence is that of Kinesin-like protein KIF26B (KIF26B) from Homo sapiens (Human).